A 185-amino-acid polypeptide reads, in one-letter code: Ribosome-recycling factor (185 aa).

It belongs to the RRF family.

It is found in the cytoplasm. Its function is as follows. Responsible for the release of ribosomes from messenger RNA at the termination of protein biosynthesis. May increase the efficiency of translation by recycling ribosomes from one round of translation to another. The polypeptide is Ribosome-recycling factor (Pasteurella multocida (strain Pm70)).